The sequence spans 20 residues: Cathepsin L-like cysteine proteinase (20 aa).

It belongs to the peptidase C1 family.

Its subcellular location is the lysosome. Thiol protease. This chain is Cathepsin L-like cysteine proteinase, found in Fasciola hepatica (Liver fluke).